The primary structure comprises 68 residues: Prokaryotic ubiquitin-like protein Pup (68 aa).

Positions 1 to 37 are disordered; the sequence is MAQERIFGTGSRREDEPDTPAPVDPPVSGAAQAQRDM. The interval 24-62 is ARC ATPase binding; sequence DPPVSGAAQAQRDMQGTDDLLAEIDGVLETNAEAFVKGF. Gln-68 is modified (deamidated glutamine). Residue Gln-68 forms an Isoglutamyl lysine isopeptide (Gln-Lys) (interchain with K-? in acceptor proteins) linkage.

It belongs to the prokaryotic ubiquitin-like protein family. In terms of assembly, strongly interacts with the proteasome-associated ATPase ARC through a hydrophobic interface; the interacting region of Pup lies in its C-terminal half. There is one Pup binding site per ARC hexamer ring. Is modified by deamidation of its C-terminal glutamine to glutamate by the deamidase Dop, a prerequisite to the subsequent pupylation process.

It participates in protein degradation; proteasomal Pup-dependent pathway. Its function is as follows. Protein modifier that is covalently attached to lysine residues of substrate proteins, thereby targeting them for proteasomal degradation. The tagging system is termed pupylation. This Kocuria rhizophila (strain ATCC 9341 / DSM 348 / NBRC 103217 / DC2201) protein is Prokaryotic ubiquitin-like protein Pup.